The sequence spans 211 residues: Imidazole glycerol phosphate synthase subunit HisH (211 aa).

The region spanning 1–211 is the Glutamine amidotransferase type-1 domain; the sequence is MIGIIDYGMG…VGIATGRGNG (211 aa). The Nucleophile role is filled by Cys79. Residues His186 and Glu188 contribute to the active site.

As to quaternary structure, heterodimer of HisH and HisF.

The protein localises to the cytoplasm. The catalysed reaction is 5-[(5-phospho-1-deoxy-D-ribulos-1-ylimino)methylamino]-1-(5-phospho-beta-D-ribosyl)imidazole-4-carboxamide + L-glutamine = D-erythro-1-(imidazol-4-yl)glycerol 3-phosphate + 5-amino-1-(5-phospho-beta-D-ribosyl)imidazole-4-carboxamide + L-glutamate + H(+). The enzyme catalyses L-glutamine + H2O = L-glutamate + NH4(+). It participates in amino-acid biosynthesis; L-histidine biosynthesis; L-histidine from 5-phospho-alpha-D-ribose 1-diphosphate: step 5/9. IGPS catalyzes the conversion of PRFAR and glutamine to IGP, AICAR and glutamate. The HisH subunit catalyzes the hydrolysis of glutamine to glutamate and ammonia as part of the synthesis of IGP and AICAR. The resulting ammonia molecule is channeled to the active site of HisF. This Geobacillus kaustophilus (strain HTA426) protein is Imidazole glycerol phosphate synthase subunit HisH.